Reading from the N-terminus, the 706-residue chain is Polyribonucleotide nucleotidyltransferase (706 aa).

Residues Asp486 and Asp492 each coordinate Mg(2+). Positions 553–612 (PRIHTIKISTDKIKDVIGKGGSVIRALTEETGTTIEIEDDGTVKIASTDGEKAKHAIRRI) constitute a KH domain. One can recognise an S1 motif domain in the interval 622 to 690 (GRVYQGKVTR…RQGRVRLSIK (69 aa)).

Belongs to the polyribonucleotide nucleotidyltransferase family. Component of the RNA degradosome, which is a multiprotein complex involved in RNA processing and mRNA degradation. Requires Mg(2+) as cofactor.

The protein resides in the cytoplasm. It carries out the reaction RNA(n+1) + phosphate = RNA(n) + a ribonucleoside 5'-diphosphate. In terms of biological role, involved in mRNA degradation. Catalyzes the phosphorolysis of single-stranded polyribonucleotides processively in the 3'- to 5'-direction. In Pectobacterium carotovorum subsp. carotovorum (strain PC1), this protein is Polyribonucleotide nucleotidyltransferase.